The sequence spans 295 residues: Protease HtpX (295 aa).

Helical transmembrane passes span 4–24 and 34–54; these read IVLFLLTNLAVMLVFGIILSL and GLMIMAGLFGFGGAFVSLLMS. H139 provides a ligand contact to Zn(2+). E140 is a catalytic residue. H143 is a binding site for Zn(2+). The next 2 membrane-spanning stretches (helical) occupy residues 147–167 and 194–214; these read GDMVTMTLLQGIVNTFVIFIS and IVYMVASMVLEIVFGILASII. E223 is a Zn(2+) binding site.

Belongs to the peptidase M48B family. Requires Zn(2+) as cofactor.

The protein resides in the cell inner membrane. This Photorhabdus laumondii subsp. laumondii (strain DSM 15139 / CIP 105565 / TT01) (Photorhabdus luminescens subsp. laumondii) protein is Protease HtpX.